The primary structure comprises 283 residues: Rhomboid-like protease 2 (283 aa).

Residues 1 to 11 (MANIRTLSDYA) are compositionally biased toward polar residues. The interval 1–26 (MANIRTLSDYASSPPRGSSALEGEVG) is disordered. Helical transmembrane passes span 62–82 (IIIISFVQIAVYIASLAAGLA), 114–134 (ICPLFLHLNLFHILMNLWVQI), and 149–169 (LLAVYFGVGVLANMISAAVLF). Ser-178 serves as the catalytic Nucleophile. Transmembrane regions (helical) follow at residues 179–199 (TAVFALIGVQLAELALIWHAI), 205–225 (AIISVCICLFFVFVSSFGSHM), 227–247 (SVGHIGGLVMGFAAGIWLNEN), and 260–280 (LTSQVALAAAPILSCIFIFLV). Residue His-230 is part of the active site.

The protein belongs to the peptidase S54 family.

It is found in the membrane. The catalysed reaction is Cleaves type-1 transmembrane domains using a catalytic dyad composed of serine and histidine that are contributed by different transmembrane domains.. Functionally, serine protease involved in intramembrane proteolysis and the subsequent release of polypeptides from their membrane anchors. In Toxoplasma gondii, this protein is Rhomboid-like protease 2 (ROM2).